We begin with the raw amino-acid sequence, 332 residues long: N-arachidonyl glycine receptor (332 aa).

Topologically, residues 1–26 (MTTPHSQAQPGLPIDPHPDEYKVAAL) are extracellular. The helical transmembrane segment at 27 to 47 (VFYSCIFIIGLFVNVTALWVF) threads the bilayer. At 48–56 (SCTTKKRTT) the chain is on the cytoplasmic side. Residues 57 to 77 (VTVYMMNVALLDLVFIMSLPF) traverse the membrane as a helical segment. The Extracellular portion of the chain corresponds to 78–95 (RMLYYAKGEWPFGEYFCR). A disulfide bridge links Cys94 with Cys173. A helical membrane pass occupies residues 96-116 (ILGALTVFYPSIALWLLAFIS). Residues 117 to 138 (ADRYMAIVQPKYAKELKNTCKA) are Cytoplasmic-facing. The chain crosses the membrane as a helical span at residues 139 to 159 (VMACVGVWIMTLTTTIPLLLL). Over 160 to 192 (YEDPDTASSTPPTCLKISDIIYLKAINALNFTR) the chain is Extracellular. A glycan (N-linked (GlcNAc...) asparagine) is linked at Asn189. Residues 193-213 (LIFFFLIPLFIMIGCYLVIIH) traverse the membrane as a helical segment. The Cytoplasmic segment spans residues 214 to 233 (SLLHGKTSKLKPKVKEKSIR). Residues 234-254 (IIITLMVQVLVCFMPFHICFA) form a helical membrane-spanning segment. Residues 255 to 269 (FLMLGGDENSYNPWG) lie on the Extracellular side of the membrane. A helical membrane pass occupies residues 270 to 290 (AFTTFLMNLSTCLDVILYYIV). Residues 291–332 (SKQFQARVISVMLYRNYLRSVRRKSFRSGSLRSLSNINSEML) are Cytoplasmic-facing. Ser323 carries the post-translational modification Phosphoserine.

The protein belongs to the G-protein coupled receptor 1 family.

It is found in the cell membrane. Its subcellular location is the cytoplasmic vesicle membrane. Functionally, g protein-coupled receptor (GPCR) that plays a role in diverse physiological processes particularly within the immune and nervous systems. Becomes active when triggered by various endogenous ligands including endocannabinoid N-arachidonyl glycine (NAGly), delta-9-tetrahydrocannabinol or resolvin D2/RvD2 derived from the omega-3 fatty acid docosahexaenoic acid (DHA). Upon RvD2 binding, facilitates the resolution of inflammation, aiding in tissue repair and homeostasis. Mechanistically, RvD2 ligation initiates Galphas protein coupling, activation of cAMP-PKA signaling pathway and phosphorylation of STAT3, leading to RvD2-stimulated macrophage phagocytosis. Mediates NAGly-induced process of reorganization of actin filaments and induction of acrosomal exocytosis. Activation by N-arachidonoyl glycine (NAGly) can also induce apoptosis in macrophages. Plays a role in homeostasis of CD8+ subsets of intraepithelial lymphocytes (IELs) (CD8alphaalpha and CD8alphabeta IELs) in small intestine by supporting preferential migration of CD8alphaalpha T-cells to intraepithelial compartment over lamina propria compartment, and by mediating their reconstitution into small intestine after bone marrow transplant. Participates also in hypotensive responses, mediating reduction in intraocular and blood pressure. The protein is N-arachidonyl glycine receptor (GPR18) of Bos taurus (Bovine).